Consider the following 396-residue polypeptide: Acetate kinase (396 aa).

Asn8 serves as a coordination point for Mg(2+). Lys15 lines the ATP pocket. Residue Arg89 coordinates substrate. Asp146 serves as the catalytic Proton donor/acceptor. ATP-binding positions include 206–210, 280–282, and 328–332; these read HLGNG, DMR, and GVGEN. Glu382 contributes to the Mg(2+) binding site.

It belongs to the acetokinase family. In terms of assembly, homodimer. Mg(2+) serves as cofactor. Requires Mn(2+) as cofactor.

The protein localises to the cytoplasm. The enzyme catalyses acetate + ATP = acetyl phosphate + ADP. It participates in metabolic intermediate biosynthesis; acetyl-CoA biosynthesis; acetyl-CoA from acetate: step 1/2. Catalyzes the formation of acetyl phosphate from acetate and ATP. Can also catalyze the reverse reaction. The sequence is that of Acetate kinase from Clavibacter sepedonicus (Clavibacter michiganensis subsp. sepedonicus).